Reading from the N-terminus, the 63-residue chain is Sec-independent protein translocase protein TatA (63 aa).

The helical transmembrane segment at 1–21 (MGSFSMWHWLIVLVIVLLLFG) threads the bilayer. Residues 42–63 (GMTDEDAPDTAKTVDHKADETK) are disordered. Positions 53–63 (KTVDHKADETK) are enriched in basic and acidic residues.

This sequence belongs to the TatA/E family. The Tat system comprises two distinct complexes: a TatABC complex, containing multiple copies of TatA, TatB and TatC subunits, and a separate TatA complex, containing only TatA subunits. Substrates initially bind to the TatABC complex, which probably triggers association of the separate TatA complex to form the active translocon.

The protein localises to the cell inner membrane. Its function is as follows. Part of the twin-arginine translocation (Tat) system that transports large folded proteins containing a characteristic twin-arginine motif in their signal peptide across membranes. TatA could form the protein-conducting channel of the Tat system. In Rhizobium leguminosarum bv. trifolii (strain WSM2304), this protein is Sec-independent protein translocase protein TatA.